The sequence spans 467 residues: Asparagine--tRNA ligase (467 aa).

The protein belongs to the class-II aminoacyl-tRNA synthetase family. In terms of assembly, homodimer.

The protein localises to the cytoplasm. It catalyses the reaction tRNA(Asn) + L-asparagine + ATP = L-asparaginyl-tRNA(Asn) + AMP + diphosphate + H(+). The sequence is that of Asparagine--tRNA ligase from Actinobacillus pleuropneumoniae serotype 5b (strain L20).